Reading from the N-terminus, the 5161-residue chain is Nonribosomal peptide synthetase TES (5161 aa).

Residues 37–436 (EEQAIARPNA…GRKDSQTKVR (400 aa)) are adenylation 1. The 77-residue stretch at 569–645 (QPETEKEQIL…KLTSAAIPSV (77 aa)) folds into the Carrier 1 domain. O-(pantetheine 4'-phosphoryl)serine is present on Ser-606. Residues 659–1098 (GHVAQSFAQG…LLCDVELSKL (440 aa)) are condensation 1. The adenylation 2 stretch occupies residues 1122 to 1522 (RQQTSLCPSR…GRMDGQVKIR (401 aa)). The interval 1630–1742 (MNEWLDDTID…YLFKTTQQLL (113 aa)) is methyltransferase (M) domain 1. The Carrier 2 domain occupies 2068-2141 (TRAESKIQQL…QLAAVAQEHV (74 aa)). Position 2102 is an O-(pantetheine 4'-phosphoryl)serine (Ser-2102). The condensation 2 stretch occupies residues 2179 to 2593 (EDIYPCSPLQ…MLTQDDEQQL (415 aa)). The tract at residues 2614-3010 (DQAKSRPEAD…GRKDGQVKVR (397 aa)) is adenylation 3. The region spanning 3139-3215 (KPETKHEMAL…RLANRLVDPP (77 aa)) is the Carrier 3 domain. Ser-3176 carries the post-translational modification O-(pantetheine 4'-phosphoryl)serine. Residues 3232–3668 (LQSFAQGRLW…VVPLMTVEAH (437 aa)) form a condensation 3 region. The adenylation 4 stretch occupies residues 3694–4098 (FRQQAAMQPS…GRIDGQVKIR (405 aa)). A methyltransferase (M) domain 2 region spans residues 4203-4329 (EMKEWLEETI…KVDGVKTLFF (127 aa)). Positions 4643 to 4725 (RELSTAELKV…QFSQHEGEQK (83 aa)) constitute a Carrier 4 domain. At Ser-4680 the chain carries O-(pantetheine 4'-phosphoryl)serine. The segment at 4785–5093 (FFLNLGTRVD…HQNLNEHPEF (309 aa)) is condensation 4.

It belongs to the NRP synthetase family.

It functions in the pathway phytotoxin biosynthesis. Nonribosomal peptide synthetase; part of the gene cluster that mediates the biosynthesis of the phytotoxin tentoxin, an inhibitor the F1-ATPase activity of chloroplasts, resulting in chlorosis in sensitive plants. Tentoxin is a cyclic tetrapeptide that consists of four amino acid residues: glycine (Gly), alanine (Ala), leucine (Leu), and dehydrophenylalanine (DPhe). In addition, both the Ala and DPhe residues are N-methylated. The nonribosomal peptide synthetase TES assembles tentoxin from the four substrate amino acids. The adenylation domains of each of the 4 modules are responsible for the activation of Gly, Ala, Leu and DPhe, respectively. In addition, the N-methyltransferase domains in the second and fourth modules of TES could be responsible for N-methylation of Ala and DPhe residues. Finally, the condensation domain located in the termination module probably catalyzes the formation of the intramolecular macrocyclization and then the release of tentoxin. The cytochrome P450 monooxygenase TES1 is predicted to be involved in the formation of DPhe. The protein is Nonribosomal peptide synthetase TES of Alternaria alternata (Alternaria rot fungus).